A 127-amino-acid chain; its full sequence is DNA-directed RNA polymerase subunit omega (127 aa).

Belongs to the RNA polymerase subunit omega family. In terms of assembly, the RNAP catalytic core consists of 2 alpha, 1 beta, 1 beta' and 1 omega subunit. When a sigma factor is associated with the core the holoenzyme is formed, which can initiate transcription.

The enzyme catalyses RNA(n) + a ribonucleoside 5'-triphosphate = RNA(n+1) + diphosphate. In terms of biological role, promotes RNA polymerase assembly. Latches the N- and C-terminal regions of the beta' subunit thereby facilitating its interaction with the beta and alpha subunits. This chain is DNA-directed RNA polymerase subunit omega, found in Rickettsia rickettsii (strain Iowa).